The sequence spans 152 residues: Clitocypin-4/-3 (152 aa).

The protein belongs to the protease inhibitor I48 family. Homodimer.

Functionally, binds and inhibits cysteine proteinases. Inhibits most strongly papain and cathepsin L, more weakly bromelain and cathepsin B while it is completely ineffective against cathepsin H. The polypeptide is Clitocypin-4/-3 (clt4) (Clitocybe nebularis (Clouded agaric)).